The sequence spans 134 residues: MSDFWENELVEIAAYYSVAVLCLVLFLTVFELVTAYKNWEEIQKGNLAVAMATGGKILGIANVFQHSISQHNSLLQMIGWGVYGFVMLLISYFIFEFLTPRFKIDQEIENDNRAVGFISFVISVGLSFVVAAGI.

Helical transmembrane passes span 10-30 (VEIA…LTVF), 48-68 (AVAM…QHSI), 78-98 (IGWG…FEFL), and 114-134 (AVGF…AAGI).

Belongs to the UPF0719 family.

The protein localises to the cell membrane. This chain is UPF0719 transmembrane protein YshE (yshE), found in Bacillus subtilis (strain 168).